We begin with the raw amino-acid sequence, 414 residues long: Esterase FrsA (414 aa).

The protein belongs to the FrsA family.

The catalysed reaction is a carboxylic ester + H2O = an alcohol + a carboxylate + H(+). Functionally, catalyzes the hydrolysis of esters. The polypeptide is Esterase FrsA (Escherichia fergusonii (strain ATCC 35469 / DSM 13698 / CCUG 18766 / IAM 14443 / JCM 21226 / LMG 7866 / NBRC 102419 / NCTC 12128 / CDC 0568-73)).